We begin with the raw amino-acid sequence, 371 residues long: Probable G protein-coupled receptor 85 (371 aa).

Residues 1–26 (MANYSHAGDHNILQNVSPLATFLKLT) are Extracellular-facing. N-linked (GlcNAc...) asparagine glycosylation occurs at N3. The chain crosses the membrane as a helical span at residues 27-47 (SLGFIIGVGVVGNLLISILLV). Topologically, residues 48–58 (KDKSLHRAPYY) are cytoplasmic. Residues 59–79 (FLLDLCASDILRSAICFPFVF) form a helical membrane-spanning segment. The Extracellular segment spans residues 80–96 (TSVKNGSAWTYGTLTCK). An N-linked (GlcNAc...) asparagine glycan is attached at N84. C95 and C173 are joined by a disulfide. A helical transmembrane segment spans residues 97–117 (VIAFLGVLSCFHTAFMLFCVS). Topologically, residues 118-138 (VTRYLAIAHHRFYTKRLTFWT) are cytoplasmic. A helical transmembrane segment spans residues 139 to 159 (CLAVICMVWTLSVAMAFPPVL). The Extracellular portion of the chain corresponds to 160–189 (DVGTYSFIREEDQCTFQHRSFRANDSLGFM). N-linked (GlcNAc...) asparagine glycosylation occurs at N183. The helical transmembrane segment at 190-210 (LLLALILLATQLVYLKLIFFV) threads the bilayer. Over 211 to 287 (HDRRKMKPVQ…FKTEKRISRM (77 aa)) the chain is Cytoplasmic. Residues 288–308 (FYIITFFFLSLWGPYLVACYW) form a helical membrane-spanning segment. Residues 309-321 (RVFARGPVIPGGY) lie on the Extracellular side of the membrane. Residues 322 to 342 (LTAAVWMSFAQAGVNPFICIF) form a helical membrane-spanning segment. At 343 to 371 (SNRELRRCFSTTLLYCRKSRLPREPYCVI) the chain is on the cytoplasmic side.

It belongs to the G-protein coupled receptor 1 family.

It is found in the cell membrane. Its function is as follows. Orphan receptor. This chain is Probable G protein-coupled receptor 85 (gpr85), found in Danio rerio (Zebrafish).